We begin with the raw amino-acid sequence, 384 residues long: ATP synthase subunit a (384 aa).

The interval 22–60 is disordered; that stretch reads PAPAAAPVEQHGAPAPEAAAPDAHAAPAGEHGAAVEAHA. 6 consecutive transmembrane segments (helical) span residues 131 to 151, 189 to 209, 218 to 238, 258 to 278, 293 to 313, and 319 to 339; these read KHVM…LAAV, FVPY…FGLI, NLSV…YAAI, LAPL…TKPF, FVIL…VAFG, and LGIF…FTML. Residues 355–384 are disordered; sequence HGHAEEHGHAGPGMGSEHGSHVAGASPGHG.

The protein belongs to the ATPase A chain family. As to quaternary structure, F-type ATPases have 2 components, CF(1) - the catalytic core - and CF(0) - the membrane proton channel. CF(1) has five subunits: alpha(3), beta(3), gamma(1), delta(1), epsilon(1). CF(0) has three main subunits: a(1), b(2) and c(9-12). The alpha and beta chains form an alternating ring which encloses part of the gamma chain. CF(1) is attached to CF(0) by a central stalk formed by the gamma and epsilon chains, while a peripheral stalk is formed by the delta and b chains.

Its subcellular location is the cell inner membrane. In terms of biological role, key component of the proton channel; it plays a direct role in the translocation of protons across the membrane. The chain is ATP synthase subunit a from Anaeromyxobacter dehalogenans (strain 2CP-1 / ATCC BAA-258).